A 116-amino-acid polypeptide reads, in one-letter code: Ribosome-binding factor A (116 aa).

This sequence belongs to the RbfA family. In terms of assembly, monomer. Binds 30S ribosomal subunits, but not 50S ribosomal subunits or 70S ribosomes.

It localises to the cytoplasm. In terms of biological role, one of several proteins that assist in the late maturation steps of the functional core of the 30S ribosomal subunit. Associates with free 30S ribosomal subunits (but not with 30S subunits that are part of 70S ribosomes or polysomes). Required for efficient processing of 16S rRNA. May interact with the 5'-terminal helix region of 16S rRNA. The sequence is that of Ribosome-binding factor A from Staphylococcus aureus (strain JH9).